A 142-amino-acid polypeptide reads, in one-letter code: Galactose-6-phosphate isomerase subunit LacA (142 aa).

This sequence belongs to the LacAB/RpiB family. In terms of assembly, heteromultimeric protein consisting of LacA and LacB.

The catalysed reaction is aldehydo-D-galactose 6-phosphate = keto-D-tagatose 6-phosphate. Its pathway is carbohydrate metabolism; D-galactose 6-phosphate degradation; D-tagatose 6-phosphate from D-galactose 6-phosphate: step 1/1. This chain is Galactose-6-phosphate isomerase subunit LacA, found in Staphylococcus aureus.